A 70-amino-acid polypeptide reads, in one-letter code: Alpha-conotoxin EIIB (70 aa).

The N-terminal stretch at Met-1–Ser-21 is a signal peptide. A propeptide spanning residues Phe-22–Arg-51 is cleaved from the precursor. Gln-52 carries the post-translational modification Pyrrolidone carboxylic acid. The residue at position 54 (Pro-54) is a Hydroxyproline. 2 disulfide bridges follow: Cys-56/Cys-62 and Cys-57/Cys-67. Position 67 is a cysteine amide (Cys-67).

As to expression, expressed by the venom duct.

It localises to the secreted. Alpha-conotoxins bind to the nicotinic acetylcholine receptors (nAChR) and inhibit them. This peptide potently blocks muscular nicotinic acetylcholine receptor (CHRNA1-CHRNB1-CHRNG-CHRND), and has no effect on neuronal receptors. It is able to totally displace [125I]-Bgtx from the Torpedo receptor with an inhibition constant (Ki) of 2.2 and 0.7 nM. This chain is Alpha-conotoxin EIIB, found in Conus ermineus (Agate cone).